The following is a 61-amino-acid chain: Large ribosomal subunit protein uL30 (61 aa).

The protein belongs to the universal ribosomal protein uL30 family. Part of the 50S ribosomal subunit.

The sequence is that of Large ribosomal subunit protein uL30 from Exiguobacterium sp. (strain ATCC BAA-1283 / AT1b).